The following is a 180-amino-acid chain: MSIEVSNESGMDVSEEELISVARFVIARMDVHPAAELSMVLVDSATMADLHMRWMDLPGPTDVMSFPMDELEPGGRPDSPEPGPSMLGDIVLCPSFAADQAEKAGHPLAHELALLTVHGVLHLLGYDHAEPEEEKEMFGLQNQLLDDWYEDLRRAERDAALAARDQKLLGKAGFFDAPDQ.

Residues His-118, His-122, and His-128 each coordinate Zn(2+).

Belongs to the endoribonuclease YbeY family. The cofactor is Zn(2+).

The protein resides in the cytoplasm. Functionally, single strand-specific metallo-endoribonuclease involved in late-stage 70S ribosome quality control and in maturation of the 3' terminus of the 16S rRNA. The polypeptide is Endoribonuclease YbeY (Rhodococcus opacus (strain B4)).